Reading from the N-terminus, the 174-residue chain is MTYALFLLSVSLVMGFVGFSSKPSPIYGGLVLIVSGVVGCAIILNYGGGYMGLMVFLIYLGGMMVVFGYTTAMAIEEYPEAWGSGVEVLVSVLVGLAMEVGLVLWVKGYDGMVVVVNFNSVGSWMIYEGEGPGLIREDPIGAGALYDYGRWLVVVTGWTLFVGVYIVIEIARGN.

6 consecutive transmembrane segments (helical) span residues Met1–Ser21, Ser24–Leu44, Gly47–Phe67, Val86–Val106, Gly111–Gly131, and Trp151–Ala171.

Belongs to the complex I subunit 6 family. In terms of assembly, core subunit of respiratory chain NADH dehydrogenase (Complex I) which is composed of 45 different subunits.

The protein localises to the mitochondrion inner membrane. It carries out the reaction a ubiquinone + NADH + 5 H(+)(in) = a ubiquinol + NAD(+) + 4 H(+)(out). Core subunit of the mitochondrial membrane respiratory chain NADH dehydrogenase (Complex I) which catalyzes electron transfer from NADH through the respiratory chain, using ubiquinone as an electron acceptor. Essential for the catalytic activity and assembly of complex I. The sequence is that of NADH-ubiquinone oxidoreductase chain 6 (MT-ND6) from Pan troglodytes (Chimpanzee).